A 351-amino-acid chain; its full sequence is Glycerol-3-phosphate dehydrogenase [NAD(P)+] (351 aa).

The NADPH site is built by Ser12, Trp13, His33, and Lys114. The sn-glycerol 3-phosphate site is built by Lys114, Gly145, and Ser147. Residue Ala149 participates in NADPH binding. Residues Lys200, Asp253, Ser263, Arg264, and Asn265 each coordinate sn-glycerol 3-phosphate. Lys200 (proton acceptor) is an active-site residue. Residue Arg264 coordinates NADPH. NADPH contacts are provided by Val288 and Glu290.

Belongs to the NAD-dependent glycerol-3-phosphate dehydrogenase family.

Its subcellular location is the cytoplasm. The enzyme catalyses sn-glycerol 3-phosphate + NAD(+) = dihydroxyacetone phosphate + NADH + H(+). The catalysed reaction is sn-glycerol 3-phosphate + NADP(+) = dihydroxyacetone phosphate + NADPH + H(+). It participates in membrane lipid metabolism; glycerophospholipid metabolism. Functionally, catalyzes the reduction of the glycolytic intermediate dihydroxyacetone phosphate (DHAP) to sn-glycerol 3-phosphate (G3P), the key precursor for phospholipid synthesis. In Lacticaseibacillus paracasei (strain ATCC 334 / BCRC 17002 / CCUG 31169 / CIP 107868 / KCTC 3260 / NRRL B-441) (Lactobacillus paracasei), this protein is Glycerol-3-phosphate dehydrogenase [NAD(P)+].